The following is a 262-amino-acid chain: Putative glutamine--fructose-6-phosphate aminotransferase [isomerizing] (262 aa).

Catalysis depends on C2, which acts as the Nucleophile; for GATase activity. Residues 2-262 (CGIFGYCNFL…RKSPPFVHNT (261 aa)) form the Glutamine amidotransferase type-2 domain.

The catalysed reaction is D-fructose 6-phosphate + L-glutamine = D-glucosamine 6-phosphate + L-glutamate. Its pathway is nucleotide-sugar biosynthesis; UDP-N-acetyl-alpha-D-glucosamine biosynthesis; alpha-D-glucosamine 6-phosphate from D-fructose 6-phosphate: step 1/1. In terms of biological role, involved in amino sugar synthesis (formation of chitin, supplies the amino sugars of asparagine-linked oligosaccharides of glycoproteins). This chain is Putative glutamine--fructose-6-phosphate aminotransferase [isomerizing], found in Saccharomyces cerevisiae (strain ATCC 204508 / S288c) (Baker's yeast).